The sequence spans 80 residues: uncharacterized protein (80 aa).

This is an uncharacterized protein from Enterobacteria phage T4 (Bacteriophage T4).